The following is a 276-amino-acid chain: Large ribosomal subunit protein uL2 (276 aa).

Disordered regions lie at residues 30–57 (EKSL…QGGG) and 219–276 (TVRG…RSKK).

It belongs to the universal ribosomal protein uL2 family. As to quaternary structure, part of the 50S ribosomal subunit. Forms a bridge to the 30S subunit in the 70S ribosome.

One of the primary rRNA binding proteins. Required for association of the 30S and 50S subunits to form the 70S ribosome, for tRNA binding and peptide bond formation. It has been suggested to have peptidyltransferase activity; this is somewhat controversial. Makes several contacts with the 16S rRNA in the 70S ribosome. This chain is Large ribosomal subunit protein uL2, found in Exiguobacterium sibiricum (strain DSM 17290 / CCUG 55495 / CIP 109462 / JCM 13490 / 255-15).